We begin with the raw amino-acid sequence, 276 residues long: Formamidopyrimidine-DNA glycosylase (276 aa).

Catalysis depends on proline 2, which acts as the Schiff-base intermediate with DNA. Glutamate 3 functions as the Proton donor in the catalytic mechanism. The active-site Proton donor; for beta-elimination activity is the lysine 58. The DNA site is built by histidine 94, arginine 112, and arginine 157. Residues 242–276 (FVYDRAGEPCRVCGAPIRQIVQGQRSTYFCPNCQR) form an FPG-type zinc finger. The Proton donor; for delta-elimination activity role is filled by arginine 266.

This sequence belongs to the FPG family. In terms of assembly, monomer. Zn(2+) serves as cofactor.

It catalyses the reaction Hydrolysis of DNA containing ring-opened 7-methylguanine residues, releasing 2,6-diamino-4-hydroxy-5-(N-methyl)formamidopyrimidine.. The enzyme catalyses 2'-deoxyribonucleotide-(2'-deoxyribose 5'-phosphate)-2'-deoxyribonucleotide-DNA = a 3'-end 2'-deoxyribonucleotide-(2,3-dehydro-2,3-deoxyribose 5'-phosphate)-DNA + a 5'-end 5'-phospho-2'-deoxyribonucleoside-DNA + H(+). Functionally, involved in base excision repair of DNA damaged by oxidation or by mutagenic agents. Acts as a DNA glycosylase that recognizes and removes damaged bases. Has a preference for oxidized purines, such as 7,8-dihydro-8-oxoguanine (8-oxoG). Has AP (apurinic/apyrimidinic) lyase activity and introduces nicks in the DNA strand. Cleaves the DNA backbone by beta-delta elimination to generate a single-strand break at the site of the removed base with both 3'- and 5'-phosphates. This Burkholderia pseudomallei (strain 1710b) protein is Formamidopyrimidine-DNA glycosylase.